The chain runs to 206 residues: Large ribosomal subunit protein eL13z (206 aa).

Residues 183-206 (ERTNKRHAGARAKRAADAEKEEKK) are disordered. The segment covering 186–195 (NKRHAGARAK) has biased composition (basic residues). Residues 196–206 (RAADAEKEEKK) are compositionally biased toward basic and acidic residues.

This sequence belongs to the eukaryotic ribosomal protein eL13 family.

This Brassica napus (Rape) protein is Large ribosomal subunit protein eL13z.